Consider the following 450-residue polypeptide: tRNA modification GTPase MnmE (450 aa).

Positions 23, 80, and 123 each coordinate (6S)-5-formyl-5,6,7,8-tetrahydrofolate. A TrmE-type G domain is found at 219–372 (GLHVVLAGQP…LRARLLQMAG (154 aa)). Residue asparagine 229 participates in K(+) binding. Residues 229-234 (NVGKSS), 248-254 (TPIAGTT), and 273-276 (DTAG) contribute to the GTP site. A Mg(2+)-binding site is contributed by serine 233. Positions 248, 250, and 253 each coordinate K(+). Threonine 254 contributes to the Mg(2+) binding site. (6S)-5-formyl-5,6,7,8-tetrahydrofolate is bound at residue lysine 450.

This sequence belongs to the TRAFAC class TrmE-Era-EngA-EngB-Septin-like GTPase superfamily. TrmE GTPase family. In terms of assembly, homodimer. Heterotetramer of two MnmE and two MnmG subunits. Requires K(+) as cofactor.

It localises to the cytoplasm. Functionally, exhibits a very high intrinsic GTPase hydrolysis rate. Involved in the addition of a carboxymethylaminomethyl (cmnm) group at the wobble position (U34) of certain tRNAs, forming tRNA-cmnm(5)s(2)U34. This chain is tRNA modification GTPase MnmE, found in Bordetella avium (strain 197N).